The chain runs to 216 residues: Thioredoxin-like 2, chloroplastic (216 aa).

Residues 1–58 constitute a chloroplast transit peptide; it reads MAEALLPLPRRLVVTASTPACSSASSSTSPSPHCLLSRANPRPPRLAAPSPPRHRRLK. The span at 19–40 shows a compositional bias: low complexity; that stretch reads PACSSASSSTSPSPHCLLSRAN. The interval 19–70 is disordered; the sequence is PACSSASSSTSPSPHCLLSRANPRPPRLAAPSPPRHRRLKAHAAVSDKSEQP. A compositionally biased stretch (pro residues) spans 41 to 51; the sequence is PRPPRLAAPSP. Positions 61-188 constitute a Thioredoxin domain; sequence AAVSDKSEQP…LKDAIAVHNT (128 aa). Catalysis depends on nucleophile residues cysteine 111 and cysteine 114. Cysteine 111 and cysteine 114 are disulfide-bonded.

This sequence belongs to the thioredoxin family.

Its subcellular location is the plastid. The protein resides in the chloroplast. Functionally, probable thiol-disulfide oxidoreductase that may participate in various redox reactions. This chain is Thioredoxin-like 2, chloroplastic, found in Oryza sativa subsp. japonica (Rice).